Here is a 294-residue protein sequence, read N- to C-terminus: Transcription termination/antitermination protein NusG (294 aa).

Residues 1 to 91 (MSDPNLNDAV…EEAEPAAPVD (91 aa)) are disordered. The segment covering 25–39 (DIVEAADSVDPDQAE) has biased composition (acidic residues). Residues 40 to 53 (AADLAAGEPAERAA) are compositionally biased toward low complexity. Acidic residues predominate over residues 59–85 (DDSDEDDAAAEEAVEADDESADEEEAE).

This sequence belongs to the NusG family.

Its function is as follows. Participates in transcription elongation, termination and antitermination. The chain is Transcription termination/antitermination protein NusG from Streptomyces griseus.